We begin with the raw amino-acid sequence, 335 residues long: MAITIGINGFGRIGRLVLRIALQRSDIKVVAVNDPFIAPEYAAYMFKYDSTHGRYKGEVTSKDDSLVIDGQSIKVFGEKDPASIPWGKAGVDYVIESTGVFTTTEGAQKHIDGGAKKVIITAPSSDAPMFVVGVNEQKYTPDLKIVSNASCTTNCLAPLAKVINDKFGIEEGLMTTVHSITATQKTVDGPSHKDWRGGRTASGNIIPSSTGAAKAVGKVIPELNGKLTGMSLRVPTVDVSVVDLTVRLKKSATYEEISEAIKAASNGELKGILGYTEDAVVSTDFLGSDYSSIFDQKAGILLSPTFVKLISWYDNEFGYSTRVVDLLEHVAKASN.

Residues 12 to 13 (RI), Asp34, and Lys79 contribute to the NAD(+) site. Residues 150-152 (SCT), Thr181, 210-211 (TG), and Arg233 each bind D-glyceraldehyde 3-phosphate. Cys151 acts as the Nucleophile in catalysis. Asn315 contacts NAD(+).

This sequence belongs to the glyceraldehyde-3-phosphate dehydrogenase family. As to quaternary structure, homotetramer.

Its subcellular location is the cytoplasm. The catalysed reaction is D-glyceraldehyde 3-phosphate + phosphate + NAD(+) = (2R)-3-phospho-glyceroyl phosphate + NADH + H(+). It participates in carbohydrate degradation; glycolysis; pyruvate from D-glyceraldehyde 3-phosphate: step 1/5. This chain is Glyceraldehyde-3-phosphate dehydrogenase (GPD), found in Debaryomyces hansenii (strain ATCC 36239 / CBS 767 / BCRC 21394 / JCM 1990 / NBRC 0083 / IGC 2968) (Yeast).